The primary structure comprises 254 residues: CRISPR-associated endoribonuclease Cas6 1 (254 aa).

Y32 functions as the Proton acceptor in the catalytic mechanism. H47 functions as the Proton donor in the catalytic mechanism.

It belongs to the CRISPR-associated protein Cas6/Cse3/CasE family.

Its function is as follows. CRISPR (clustered regularly interspaced short palindromic repeat) is an adaptive immune system that provides protection against mobile genetic elements (viruses, transposable elements and conjugative plasmids). CRISPR clusters contain sequences complementary to antecedent mobile elements and target invading nucleic acids. CRISPR clusters are transcribed and processed into CRISPR RNA (crRNA). This protein processes pre-crRNA into individual crRNA units. The protein is CRISPR-associated endoribonuclease Cas6 1 (cas6a) of Methanocaldococcus jannaschii (strain ATCC 43067 / DSM 2661 / JAL-1 / JCM 10045 / NBRC 100440) (Methanococcus jannaschii).